The primary structure comprises 571 residues: MANPKEKTPMCLVNELARFHSIQPQYKLLNESGPAHSKMFSVQLSLGEQTWESEGSSIKKAQQAVANKALTESTLPKPVQKPPKSNVNNNPGSITPTVELNGLAMKRGEPAIYRPLDPKPFPNYRANYNFRGMYNQRYHCPMPKIFYVQLTVGNNEFFGEGKTRQAARHNAAMKALQALQNEPIPEKSPQNGESGKEMDDDKDANKSEISLVFEIALKRNMPVSFEVIKESGPPHMKSFVTRVSVGEFSAEGEGNSKKLSKKRAATTVLQELKKLPPLPVIEKPKLFFKKRPKTIIKAGPEYGQGMNPISRLAQIQQARKEKEPDYVLLSERGMPRRREFVMQVKVGNEVATGTGPNKKIAKKNAAEAMLLQLGYKASTSLQDQLDKTGENKGWSGPKPGFPEPANNTPKGILHLSPDVYQEMEASRHRVTSGTTLGYLSPKDMNQPSSSFFSVESPSPTSSAPAARELLMNGTSPAAEAIGLKGSSPTPPCSSVQPSKQLEYLARIQGFQAALSALKQFSEQGLESIDGVVNVENGSLEKQAKHLREKADNNQANPGSITQDCKKSKSVI.

Positions 8–75 (TPMCLVNELA…ANKALTESTL (68 aa)) constitute a DRBM 1 domain. Phosphoserine is present on residues Pro9 and Val13. Position 18 is a phosphothreonine (Arg18). Phosphoserine is present on Ser21. Disordered stretches follow at residues 71–94 (TEST…PGSI) and 178–203 (ALQN…DDKD). Residues 83–94 (PKSNVNNNPGSI) show a composition bias toward polar residues. Positions 95–181 (TPTVELNGLA…AMKALQALQN (87 aa)) constitute a DRBM 2 domain. Ser188 bears the Phosphoserine mark. Over residues 194-203 (SGKEMDDDKD) the composition is skewed to basic and acidic residues. 2 consecutive DRBM domains span residues 207–274 (SEIS…ELKK) and 307–375 (NPIS…QLGY). 2 consecutive short sequence motifs (nuclear localization signal) follow at residues 273 to 317 (KKLP…QIQQ) and 373 to 412 (LGYK…PKGI). Positions 381–571 (LQDQLDKTGE…QDCKKSKSVI (191 aa)) are required for dendritic transport. The segment at 382–413 (QDQLDKTGENKGWSGPKPGFPEPANNTPKGIL) is disordered. Phosphoserine occurs at positions 395, 416, 426, 440, 456, and 493. Positions 546–571 (LREKADNNQANPGSITQDCKKSKSVI) are disordered. Polar residues predominate over residues 552 to 562 (NNQANPGSITQ).

As to quaternary structure, identified in a mRNP complex, at least composed of DHX9, DDX3X, ELAVL1, HNRNPU, IGF2BP1, ILF3, PABPC1, PCBP2, PTBP2, STAU1, STAU2, SYNCRIP and YBX1. Interacts with the exportin XPO5. This requires RNA and RAN bound to GTP. Interacts with microtubules. Isoform 2 and isoform 3 may also interact with ribosomes, and this association is independent of translation. Interacts with TRIM71 (via NHL repeats) in an RNA-dependent manner. In terms of tissue distribution, expressed in both somata and dendrites of hippocampal neurons.

The protein localises to the nucleus. It localises to the nucleolus. Its subcellular location is the cytoplasm. The protein resides in the endoplasmic reticulum. Functionally, RNA-binding protein required for the microtubule-dependent transport of neuronal RNA from the cell body to the dendrite. As protein synthesis occurs within the dendrite, the localization of specific mRNAs to dendrites may be a prerequisite for neurite outgrowth and plasticity at sites distant from the cell body. This Rattus norvegicus (Rat) protein is Double-stranded RNA-binding protein Staufen homolog 2 (Stau2).